A 195-amino-acid polypeptide reads, in one-letter code: Cytochrome c biogenesis ATP-binding export protein CcmA (195 aa).

An ABC transporter domain is found at 1 to 195 (MLSLHQLQFN…IKSAQILQLV (195 aa)). 33 to 40 (GANGSGKS) is an ATP binding site.

The protein belongs to the ABC transporter superfamily. CcmA exporter (TC 3.A.1.107) family. As to quaternary structure, the complex is composed of two ATP-binding proteins (CcmA) and two transmembrane proteins (CcmB).

It is found in the cell inner membrane. The catalysed reaction is heme b(in) + ATP + H2O = heme b(out) + ADP + phosphate + H(+). Its function is as follows. Part of the ABC transporter complex CcmAB involved in the biogenesis of c-type cytochromes; once thought to export heme, this seems not to be the case, but its exact role is uncertain. Responsible for energy coupling to the transport system. The protein is Cytochrome c biogenesis ATP-binding export protein CcmA of Rickettsia felis (strain ATCC VR-1525 / URRWXCal2) (Rickettsia azadi).